Reading from the N-terminus, the 455-residue chain is O-acyltransferase pigD (455 aa).

This sequence belongs to the trichothecene 3-O-acetyltransferase family.

It functions in the pathway secondary metabolite biosynthesis. Functionally, O-acetyltransferase; part of the gene cluster that mediates the biosynthesis of azaphilone pigments (MonAzPs), a complex mixture of compounds with a common azaphilone skeleton very widely used as food colorants. Within the pathway, pigD directly transfers the fatty acyl chain from the beta-ketoacyl-ACP produced by the pigJ-pigK fatty acid synthase (FAS) to the C-4 alcohol. The first step of the pathway is performed by the nrPKS pigA that forms the hexaketide precursor from successive condensations of five malonyl-CoA units, with a simple acetyl-CoA starter unit. The role of esterase pigG is not clear, but it may play at most a supplementary role in the formation of the benzaldehyde produced by the pigA nrPKS. This very reactive benzaldehyde is intercepted by the pigC ketoreductase that to provide the first stable enzyme-free MonAzPs intermediate, 6-(4-hydroxy-2-oxopentyl)-3-methyl-2,4-dioxocyclohexane carbaldehyde, also known as M7PKS-1. The FAD-dependent monooxygenase pigN hydroxylates M7PKS-1 at C-4, which triggers the formation of the pyran ring. PigJ, pigK and pigD are involved in the acetylation of the pyran ring. PigJ and pigK form the two subunits of a dedicated fungal FAS that produces the side chain fatty acyl moiety of MonAzPs and pigD transfers the fatty acyl chain to the C-4 alcohol. PigM and pigO are involved in the elimination of the omega-1 alcohol. PigM acts as an O-acetyltransferase that synthesizes the putative O-11 acetyl intermediate whereas pigO eliminates acetic acid to yield an intermediate with a C10(11) double bond. The dehydration of the C-11 alcohol followed by the reduction of the C6(7) double bond by the NAD(P)H-dependent oxidoreductase pigE increases the electrophilicity of the C-5 ketone of the resulting acyl benzopyran. This in turn sets up the C-5 ketone for an intramolecular Knoevenagel aldol condensation with the C-20 enol of the side chain. This condensation affords the characteristic linear tricyclic carbon skeletons of the yellow pigments that serve as the common precursors for the classical yellow pigments monascin and ankaflavin, orange pigments rubopunctatin and monascorubrin, and red pigments ribropunctamine and monascorubramine. The FAD-dependent oxidoreductase pigF is especially invoved in the biosynthesis of orange and red pigments via desaturation of C6(7). The protein is O-acyltransferase pigD of Monascus ruber (Mold).